The primary structure comprises 513 residues: ATP synthase subunit alpha (513 aa).

169–176 (GDRQTGKS) is an ATP binding site.

This sequence belongs to the ATPase alpha/beta chains family. In terms of assembly, F-type ATPases have 2 components, CF(1) - the catalytic core - and CF(0) - the membrane proton channel. CF(1) has five subunits: alpha(3), beta(3), gamma(1), delta(1), epsilon(1). CF(0) has three main subunits: a(1), b(2) and c(9-12). The alpha and beta chains form an alternating ring which encloses part of the gamma chain. CF(1) is attached to CF(0) by a central stalk formed by the gamma and epsilon chains, while a peripheral stalk is formed by the delta and b chains.

The protein resides in the cell inner membrane. The catalysed reaction is ATP + H2O + 4 H(+)(in) = ADP + phosphate + 5 H(+)(out). In terms of biological role, produces ATP from ADP in the presence of a proton gradient across the membrane. The alpha chain is a regulatory subunit. The protein is ATP synthase subunit alpha of Blochmanniella floridana.